We begin with the raw amino-acid sequence, 210 residues long: Outer-membrane lipoprotein carrier protein (210 aa).

A signal peptide spans methionine 1–alanine 23.

Belongs to the LolA family. In terms of assembly, monomer.

It localises to the periplasm. Participates in the translocation of lipoproteins from the inner membrane to the outer membrane. Only forms a complex with a lipoprotein if the residue after the N-terminal Cys is not an aspartate (The Asp acts as a targeting signal to indicate that the lipoprotein should stay in the inner membrane). The chain is Outer-membrane lipoprotein carrier protein from Haemophilus ducreyi (strain 35000HP / ATCC 700724).